The following is a 111-amino-acid chain: Iron-sulfur cluster insertion protein ErpA (111 aa).

The iron-sulfur cluster site is built by cysteine 39, cysteine 103, and cysteine 105.

Belongs to the HesB/IscA family. In terms of assembly, homodimer. Requires iron-sulfur cluster as cofactor.

Functionally, required for insertion of 4Fe-4S clusters for at least IspG. The chain is Iron-sulfur cluster insertion protein ErpA from Buchnera aphidicola subsp. Cinara cedri (strain Cc).